The primary structure comprises 104 residues: Transcription elongation factor A protein-like 9 (104 aa).

Residues 1 to 48 form a disordered region; the sequence is MKPCQKMEGNLEKEDEPKPEEEPKPEEKPEEGQEPEEEEKSEETFRER. Basic and acidic residues predominate over residues 9 to 31; the sequence is GNLEKEDEPKPEEEPKPEEKPEE. Positions 32–41 are enriched in acidic residues; it reads GQEPEEEEKS.

It belongs to the TFS-II family. TFA subfamily.

It is found in the nucleus. In terms of biological role, may be involved in transcriptional regulation. The sequence is that of Transcription elongation factor A protein-like 9 (Tceal9) from Mus musculus (Mouse).